The primary structure comprises 320 residues: Glutathione synthetase (320 aa).

Positions 130-315 (KIFTSWFPDL…ITGMLLDYIE (186 aa)) constitute an ATP-grasp domain. ATP is bound at residue 156–212 (WEKYQDIIIKPLDAMGGANIFRIKKNDPNFSVIVENMTNYERKYCMVQNYLPEIKLG). 2 residues coordinate Mg(2+): glutamate 286 and asparagine 288.

Belongs to the prokaryotic GSH synthase family. The cofactor is Mg(2+). It depends on Mn(2+) as a cofactor.

The catalysed reaction is gamma-L-glutamyl-L-cysteine + glycine + ATP = glutathione + ADP + phosphate + H(+). It participates in sulfur metabolism; glutathione biosynthesis; glutathione from L-cysteine and L-glutamate: step 2/2. The polypeptide is Glutathione synthetase (Buchnera aphidicola subsp. Acyrthosiphon pisum (strain APS) (Acyrthosiphon pisum symbiotic bacterium)).